Here is a 108-residue protein sequence, read N- to C-terminus: Trp operon repressor homolog (108 aa).

A DNA-binding region spans residues glutamine 59 to serine 82.

It belongs to the TrpR family. Homodimer.

It is found in the cytoplasm. Its function is as follows. This protein is an aporepressor. When complexed with L-tryptophan it binds the operator region of the trp operon and prevents the initiation of transcription. In Aliivibrio salmonicida (strain LFI1238) (Vibrio salmonicida (strain LFI1238)), this protein is Trp operon repressor homolog.